The primary structure comprises 229 residues: UPF0758 protein Cagg_0777 (229 aa).

Residues 105–227 enclose the MPN domain; the sequence is PIRSPGDVAA…YVSLRERGIG (123 aa). Zn(2+) is bound by residues His176, His178, and Asp189. A JAMM motif motif is present at residues 176 to 189; sequence HNHPSGEATPSPED.

Belongs to the UPF0758 family.

This chain is UPF0758 protein Cagg_0777, found in Chloroflexus aggregans (strain MD-66 / DSM 9485).